The sequence spans 309 residues: Homoserine O-succinyltransferase (309 aa).

C142 serves as the catalytic Acyl-thioester intermediate. Substrate contacts are provided by K163 and S192. Catalysis depends on H235, which acts as the Proton acceptor. The active site involves E237. A substrate-binding site is contributed by R249.

Belongs to the MetA family. As to quaternary structure, homodimer.

Its subcellular location is the cytoplasm. It catalyses the reaction L-homoserine + succinyl-CoA = O-succinyl-L-homoserine + CoA. It participates in amino-acid biosynthesis; L-methionine biosynthesis via de novo pathway; O-succinyl-L-homoserine from L-homoserine: step 1/1. Functionally, transfers a succinyl group from succinyl-CoA to L-homoserine, forming succinyl-L-homoserine. The polypeptide is Homoserine O-succinyltransferase (Escherichia coli (strain SE11)).